A 96-amino-acid chain; its full sequence is MAVTRDEIQRVARLARLSLSEEEIETFAEQLNRILEHVERINRLDVADVPPTYHGVALQHPFREDKPLPSLDREAVLALAPEAEAGCYKVPKITEG.

It belongs to the GatC family. As to quaternary structure, heterotrimer of A, B and C subunits.

The enzyme catalyses L-glutamyl-tRNA(Gln) + L-glutamine + ATP + H2O = L-glutaminyl-tRNA(Gln) + L-glutamate + ADP + phosphate + H(+). The catalysed reaction is L-aspartyl-tRNA(Asn) + L-glutamine + ATP + H2O = L-asparaginyl-tRNA(Asn) + L-glutamate + ADP + phosphate + 2 H(+). In terms of biological role, allows the formation of correctly charged Asn-tRNA(Asn) or Gln-tRNA(Gln) through the transamidation of misacylated Asp-tRNA(Asn) or Glu-tRNA(Gln) in organisms which lack either or both of asparaginyl-tRNA or glutaminyl-tRNA synthetases. The reaction takes place in the presence of glutamine and ATP through an activated phospho-Asp-tRNA(Asn) or phospho-Glu-tRNA(Gln). The polypeptide is Aspartyl/glutamyl-tRNA(Asn/Gln) amidotransferase subunit C (Symbiobacterium thermophilum (strain DSM 24528 / JCM 14929 / IAM 14863 / T)).